Reading from the N-terminus, the 88-residue chain is Small ribosomal subunit protein bS20 (88 aa).

The disordered stretch occupies residues 1 to 27 (MANSKSAKKRALQSEKRRQHNASRRSM).

It belongs to the bacterial ribosomal protein bS20 family.

Its function is as follows. Binds directly to 16S ribosomal RNA. This Shewanella denitrificans (strain OS217 / ATCC BAA-1090 / DSM 15013) protein is Small ribosomal subunit protein bS20.